We begin with the raw amino-acid sequence, 319 residues long: uncharacterized protein (319 aa).

A disordered region spans residues 281-319; sequence KVERKQRRRDDQNIMRSKLPQQRQNPFCSTERPKRARCD. The segment covering 299 to 308 has biased composition (polar residues); that stretch reads LPQQRQNPFC.

Its subcellular location is the cytoplasm. The protein localises to the nucleus. This is an uncharacterized protein from Saccharomyces cerevisiae (strain ATCC 204508 / S288c) (Baker's yeast).